Consider the following 282-residue polypeptide: Nucleotide-binding protein XCV3122 (282 aa).

Residue 5 to 12 (GLSGSGKS) coordinates ATP. 57-60 (DVRS) contributes to the GTP binding site.

Belongs to the RapZ-like family.

Functionally, displays ATPase and GTPase activities. The polypeptide is Nucleotide-binding protein XCV3122 (Xanthomonas euvesicatoria pv. vesicatoria (strain 85-10) (Xanthomonas campestris pv. vesicatoria)).